A 57-amino-acid polypeptide reads, in one-letter code: Large ribosomal subunit protein bL32A (57 aa).

The segment at 1 to 22 is disordered; it reads MAVPARRTSKTKKRLRRTHEKL. The span at 7 to 20 shows a compositional bias: basic residues; it reads RTSKTKKRLRRTHE.

The protein belongs to the bacterial ribosomal protein bL32 family.

This is Large ribosomal subunit protein bL32A (rpmF1) from Enterococcus faecalis (strain ATCC 700802 / V583).